The following is a 220-amino-acid chain: Peptidyl-tRNA hydrolase (220 aa).

Tyr14 contacts tRNA. His19 functions as the Proton acceptor in the catalytic mechanism. 3 residues coordinate tRNA: Phe60, Asn62, and Asn106.

This sequence belongs to the PTH family. As to quaternary structure, monomer.

It localises to the cytoplasm. It carries out the reaction an N-acyl-L-alpha-aminoacyl-tRNA + H2O = an N-acyl-L-amino acid + a tRNA + H(+). Its function is as follows. Hydrolyzes ribosome-free peptidyl-tRNAs (with 1 or more amino acids incorporated), which drop off the ribosome during protein synthesis, or as a result of ribosome stalling. In terms of biological role, catalyzes the release of premature peptidyl moieties from peptidyl-tRNA molecules trapped in stalled 50S ribosomal subunits, and thus maintains levels of free tRNAs and 50S ribosomes. This is Peptidyl-tRNA hydrolase from Campylobacter hominis (strain ATCC BAA-381 / DSM 21671 / CCUG 45161 / LMG 19568 / NCTC 13146 / CH001A).